The following is a 291-amino-acid chain: START domain-containing protein 10 (291 aa).

Position 1 is an N-acetylmethionine (Met1). A disordered region spans residues 1–20 (MEKLAASTEPQGPRPVLGRE). In terms of domain architecture, START spans 14–224 (RPVLGRESVQ…MYKACLKYPE (211 aa)). Lys94, Lys197, and Lys202 each carry N6-succinyllysine. A phosphoserine mark is found at Ser253 and Ser259. Residues 260–291 (LENIDESAVAESREERMGGAGGEGSDDDTSLT) are disordered. The residue at position 284 (Ser284) is a Phosphoserine; by CK2. Ser289 carries the post-translational modification Phosphoserine.

Phosphorylation at Ser-284 by CK2 negatively regulates lipid transfer activity, possibly by decreasing membrane association.

It localises to the cell projection. Its subcellular location is the cilium. The protein localises to the flagellum. The protein resides in the cytoplasm. It is found in the membrane. May play metabolic roles in sperm maturation or fertilization. Phospholipid transfer protein that preferentially selects lipid species containing a palmitoyl or stearoyl chain on the sn-1 and an unsaturated fatty acyl chain (18:1 or 18:2) on the sn-2 position. Able to transfer phosphatidylcholine (PC) and phosphatidyetanolamline (PE) between membranes. The protein is START domain-containing protein 10 (STARD10) of Homo sapiens (Human).